The primary structure comprises 328 residues: Cell division protein ZipA (328 aa).

Over 1-4 the chain is Periplasmic; sequence MDLN. A helical membrane pass occupies residues 5 to 25; that stretch reads TILIIVGIVALVALIVHGLWS. The Cytoplasmic segment spans residues 26–328; that stretch reads NRREKSKYFD…NAEQAYLARV (303 aa). The disordered stretch occupies residues 44–82; sequence SLTSRSHTQEEMVQPNNISPNTYVENGHTPIPQPTTEKL. Polar residues predominate over residues 57 to 67; the sequence is QPNNISPNTYV.

This sequence belongs to the ZipA family. Interacts with FtsZ via their C-terminal domains.

The protein resides in the cell inner membrane. Its function is as follows. Essential cell division protein that stabilizes the FtsZ protofilaments by cross-linking them and that serves as a cytoplasmic membrane anchor for the Z ring. Also required for the recruitment to the septal ring of downstream cell division proteins. The polypeptide is Cell division protein ZipA (Haemophilus influenzae (strain ATCC 51907 / DSM 11121 / KW20 / Rd)).